We begin with the raw amino-acid sequence, 295 residues long: Small ribosomal subunit protein uS2 (295 aa).

The interval 264–295 is disordered; the sequence is KFSKTKNIDEETNTEFEQALNDTDENKNADNA.

Belongs to the universal ribosomal protein uS2 family.

This is Small ribosomal subunit protein uS2 from Rickettsia akari (strain Hartford).